Here is a 603-residue protein sequence, read N- to C-terminus: MPAENAHIRNFCIIAHIDHGKSTLADRLLDKTGTLTKREAQAQFLDNMAIERERGITIKAQSVRMNYTAKDGKQYVLNLIDTPGHVDFAYEVSRSLAACEGALLVVDATQGVEAQTLSNVYMALDHNLEIIPVINKIDLPSADVDRTRAEIEDVIGIDASVAVPCSAKEGIGIQDILESVVQNVPPPSGSADAPLKALIFDSWYDNYRGVVTLVRVLEGTLKLKQKIKLFSNNKVFEVQELGVFSPFSRPVPQLIAGEVGVLVANVKELQDAKVGDTVTEESRPTAEPFPGFQEVKPMVFSGIFPVDSADYENLRDALAKLVLNDSAFTYEPESSTALGFGFRCGYLGLLHMEIVQERLEREYNLNLITTAPSVVYRITTSKGETLLVDNPAKLPPVQHIEKFEEPILTCHIHVPNDHLGAILKLCQERRGVQKDMKYLGSSGQRVQVTYEMPLAEVVFDFFDKLKSVSRGYASLDYELAGYIESDLARLDILINGDPVDALSVIVHRERAYLRGREVCQKLKEVIPKQMYEVAIQAAIGAKIISRETISAIRKNVLAKCYGGDISRKRKLLEKQKEGKKRMKQVGTVEIPQEAFLAVLKSEQ.

Positions 6–188 (AHIRNFCIIA…SVVQNVPPPS (183 aa)) constitute a tr-type G domain. GTP contacts are provided by residues 18 to 23 (DHGKST) and 135 to 138 (NKID).

It belongs to the TRAFAC class translation factor GTPase superfamily. Classic translation factor GTPase family. LepA subfamily.

The protein localises to the cell inner membrane. It catalyses the reaction GTP + H2O = GDP + phosphate + H(+). Functionally, required for accurate and efficient protein synthesis under certain stress conditions. May act as a fidelity factor of the translation reaction, by catalyzing a one-codon backward translocation of tRNAs on improperly translocated ribosomes. Back-translocation proceeds from a post-translocation (POST) complex to a pre-translocation (PRE) complex, thus giving elongation factor G a second chance to translocate the tRNAs correctly. Binds to ribosomes in a GTP-dependent manner. This is Elongation factor 4 from Myxococcus xanthus (strain DK1622).